A 156-amino-acid polypeptide reads, in one-letter code: Small ribosomal subunit protein uS7 (156 aa).

Belongs to the universal ribosomal protein uS7 family. In terms of assembly, part of the 30S ribosomal subunit. Contacts proteins S9 and S11.

Functionally, one of the primary rRNA binding proteins, it binds directly to 16S rRNA where it nucleates assembly of the head domain of the 30S subunit. Is located at the subunit interface close to the decoding center, probably blocks exit of the E-site tRNA. In Thermoanaerobacter sp. (strain X514), this protein is Small ribosomal subunit protein uS7.